We begin with the raw amino-acid sequence, 439 residues long: MLSSILLTIFCAFLSSTGAANVADWNSLNKTLKGQLKGATPLASPCFSQVNAYEETQSEDCATAIGQQCLLDSSDPSSIKAYANVSCNQGSVPSYYIQVKSAEEVKKAFAFAARTQTAISIKNSGHDYNGRSSGAGSLSLWTRKLQELKYEPSFVPQQCGRQAGVAAITTGAGINFDQVYTFAHEKGVTYLGGSGPTVGASGGWVMTGGHGVLSRVYGLGVDRVLEFEVVTTDGVTRIANACQNQDLFWALRGGGGGTFGVILSTTTRVEPKLSIAVAFIALPANTSQQVLAEWTSLAINSTIKWAADGWGGFQGSGITLLGTPLLSLAQAESSMAELAQFAKRNGGSVAVELLSDFYDMYTKYYITNVQAGGSALFSHNWMIPSRAYANAQGRKQLQDHMDWMSSVGLNPGFLATTPYVYSGVAKQCGTFDAFGWMGL.

A signal peptide spans 1–19; sequence MLSSILLTIFCAFLSSTGA. N-linked (GlcNAc...) asparagine glycosylation is found at Asn29 and Asn84. The 184-residue stretch at 89–272 folds into the FAD-binding PCMH-type domain; it reads QGSVPSYYIQ…LSTTTRVEPK (184 aa). Residues Asn285 and Asn300 are each glycosylated (N-linked (GlcNAc...) asparagine).

The protein belongs to the oxygen-dependent FAD-linked oxidoreductase family. The cofactor is FAD.

Its pathway is mycotoxin biosynthesis. Functionally, FAD-linked oxidoreductase; part of the gene cluster that mediates the biosynthesis of the mycotoxins phomacins, leucine-derived cytochalasans with potent actin polymerization-inhibitory activities and monocot-specific antigerminative activities. The first step in the pathway is catalyzed by the hybrid PKS-NRPS phmA, assisted by the enoyl reductase phmE, that are responsible for fusion of the leucine precursor and the polyketide backbone to produce a 2-pyrrolidone intermediate. The polyketide synthase module (PKS) of phmA is responsible for the synthesis of the polyketide backbone and the downstream nonribosomal peptide synthetase (NRPS) amidates the carboxyl end of the polyketide with the leucine precursor. Because phmA lacks a designated enoylreductase (ER) domain, the required activity is provided the enoyl reductase phmE. Reduction by the hydrolyase phmG, followed by dehydration and intra-molecular Diels-Alder cyclization by the Diels-Alderase phmD then yield the required isoindolone-fused macrocycle. A number of oxidative steps catalyzed by the tailoring cytochrome P450 monooxygenase phmB, the FAD-linked oxidoreductase phmC and the short-chain dehydrogenase/reductase phmF, are further required to afford the final products, phomacin D and phomacin E. This Phaeosphaeria nodorum (strain SN15 / ATCC MYA-4574 / FGSC 10173) (Glume blotch fungus) protein is FAD-linked oxidoreductase phmC.